We begin with the raw amino-acid sequence, 203 residues long: Peptidyl-tRNA hydrolase (203 aa).

TRNA is bound at residue tyrosine 16. Catalysis depends on histidine 21, which acts as the Proton acceptor. Positions 68, 70, and 116 each coordinate tRNA.

Belongs to the PTH family. As to quaternary structure, monomer.

It localises to the cytoplasm. It catalyses the reaction an N-acyl-L-alpha-aminoacyl-tRNA + H2O = an N-acyl-L-amino acid + a tRNA + H(+). In terms of biological role, hydrolyzes ribosome-free peptidyl-tRNAs (with 1 or more amino acids incorporated), which drop off the ribosome during protein synthesis, or as a result of ribosome stalling. Catalyzes the release of premature peptidyl moieties from peptidyl-tRNA molecules trapped in stalled 50S ribosomal subunits, and thus maintains levels of free tRNAs and 50S ribosomes. This chain is Peptidyl-tRNA hydrolase, found in Nostoc sp. (strain PCC 7120 / SAG 25.82 / UTEX 2576).